Here is a 151-residue protein sequence, read N- to C-terminus: Coiled-coil-helix-coiled-coil-helix domain-containing protein 2 (151 aa).

2 disordered regions span residues 1-50 (MPRG…AAAP) and 77-111 (GHAI…AQQQ). Over residues 10–26 (SRMAPPASRAPQMRAAP) the composition is skewed to low complexity. Over residues 27–38 (RPAPVAQPPAAA) the composition is skewed to pro residues. 2 stretches are compositionally biased toward low complexity: residues 39 to 50 (PPSAVGSSAAAP) and 100 to 111 (QEPQGTQPAQQQ). The CHCH domain maps to 111-151 (QQPCLYEIKQFLECAQNQGDIKLCEGFNEVLKQCRLANGLA). 2 short sequence motifs (cx9C motif) span residues 114–124 (CLYEIKQFLEC) and 134–144 (CEGFNEVLKQC). 2 disulfide bridges follow: cysteine 114–cysteine 144 and cysteine 124–cysteine 134.

As to quaternary structure, interacts with RBPJ.

The protein resides in the nucleus. It is found in the mitochondrion. It localises to the mitochondrion intermembrane space. In terms of biological role, transcription factor. Binds to the oxygen responsive element of COX4I2 and activates its transcription under hypoxia conditions (4% oxygen), as well as normoxia conditions (20% oxygen). The chain is Coiled-coil-helix-coiled-coil-helix domain-containing protein 2 (CHCHD2) from Homo sapiens (Human).